Reading from the N-terminus, the 309-residue chain is Putative ankyrin repeat protein R603 (309 aa).

7 ANK repeats span residues 53 to 82 (QVNGYFTYCVQKNKLDAIQYLYENNLMNPE), 83 to 112 (NKSQLFKIAIVHGNIDVLKLVIDYGIDVSL), 114 to 144 (DHFAITVCTRPISNTENIIQLLIDNGADVTS), 145 to 176 (NNNLPIKFAILKGTINKSVLDLLINNGADIHA), 177 to 206 (DEYFCAKYAAKCCYIFALKYIINLGIDVNM), 214 to 243 (NVLSDTAYSSNEYTYSCIKTLLENGADISF), and 245 to 274 (DDNDTLKMCRGSKTRNILILLLDYGFDISF).

This is Putative ankyrin repeat protein R603 from Acanthamoeba polyphaga (Amoeba).